Here is a 194-residue protein sequence, read N- to C-terminus: BCL2/adenovirus E1B 19 kDa protein-interacting protein 3 (194 aa).

Residues 1–102 (MSQNGAPGMQ…SQSEEDDIER (102 aa)) form a disordered region. Positions 42–55 (DMEKILLDAQHESG) are enriched in basic and acidic residues. 5 positions are modified to phosphoserine: serine 54, serine 66, serine 86, serine 92, and serine 95. Positions 56 to 69 (RSSSKSSHCDSPPR) are enriched in low complexity. The segment covering 78 to 88 (RASETDTHSIG) has biased composition (basic and acidic residues). The BH3 motif lies at 100-125 (IERRKEVESILKKNSDWIWDWSSRPE). The helical transmembrane segment at 164–184 (VFLPSLLLSHLLAIGLGIYIG) threads the bilayer.

This sequence belongs to the NIP3 family. Homodimer. Binds to BCL2. Interacts with BNIP3L and ACAA2. Interacts (via BH3 domain) with SPATA18 (via coiled-coil domains). Interacts with BOK; promotes BOK oligomerization. Interacts with PPTC7; this interaction promotes BNIP3 degradation. In terms of assembly, (Microbial infection) Interacts with adenovirus E1B 19 kDa protein. As to quaternary structure, (Microbial infection) Interacts with Epstein-Barr virus BHRF1.

Its subcellular location is the mitochondrion. It is found in the mitochondrion outer membrane. In terms of biological role, apoptosis-inducing protein that can overcome BCL2 suppression. May play a role in repartitioning calcium between the two major intracellular calcium stores in association with BCL2. Involved in mitochondrial quality control via its interaction with SPATA18/MIEAP: in response to mitochondrial damage, participates in mitochondrial protein catabolic process (also named MALM) leading to the degradation of damaged proteins inside mitochondria. The physical interaction of SPATA18/MIEAP, BNIP3 and BNIP3L/NIX at the mitochondrial outer membrane regulates the opening of a pore in the mitochondrial double membrane in order to mediate the translocation of lysosomal proteins from the cytoplasm to the mitochondrial matrix. Plays an important role in the calprotectin (S100A8/A9)-induced cell death pathway. The sequence is that of BCL2/adenovirus E1B 19 kDa protein-interacting protein 3 from Homo sapiens (Human).